Reading from the N-terminus, the 248-residue chain is MKSILNDFLLMIQFFTRIPINKNLQCEKVNFRRGAFFLPVVAFIIGGMEFLIYLGLKNFLPANVIIVLLILFTAMVTGGLHMDGLADTCDGFFSLRDKERIIEIMKDSRIGSYGTIALIIDLLLKYQLLYSLVLKGYSIAIVLAPIIGRISILFLCLSKRTAKKNGSGNIFIGNMSKPIVFFITTIILALSTYFLGLRATIIPFIGALLITYLLYLLCLNKINGLTGDTLGACNELGEITFLLILLMM.

The next 6 helical transmembrane spans lie at 36 to 56, 59 to 79, 114 to 134, 137 to 157, 170 to 190, and 199 to 219; these read FFLP…YLGL, FLPA…VTGG, GTIA…SLVL, YSIA…FLCL, IFIG…ILAL, and ATII…LLCL.

The protein belongs to the CobS family. Mg(2+) serves as cofactor.

It is found in the cell membrane. It carries out the reaction alpha-ribazole + adenosylcob(III)inamide-GDP = adenosylcob(III)alamin + GMP + H(+). The enzyme catalyses alpha-ribazole 5'-phosphate + adenosylcob(III)inamide-GDP = adenosylcob(III)alamin 5'-phosphate + GMP + H(+). It participates in cofactor biosynthesis; adenosylcobalamin biosynthesis; adenosylcobalamin from cob(II)yrinate a,c-diamide: step 7/7. Its function is as follows. Joins adenosylcobinamide-GDP and alpha-ribazole to generate adenosylcobalamin (Ado-cobalamin). Also synthesizes adenosylcobalamin 5'-phosphate from adenosylcobinamide-GDP and alpha-ribazole 5'-phosphate. This chain is Adenosylcobinamide-GDP ribazoletransferase, found in Clostridium botulinum (strain Kyoto / Type A2).